We begin with the raw amino-acid sequence, 650 residues long: MTPLLELKDIRRSYPAGDEQVEVLKGITLDIYAGEMVAIVGASGSGKSTLMNILGCLDKATSGTYRVAGQDVATLDADALAQLHREHFGFIFQRYHLLSHLTAEQNVEVPAVYAGLERKQRLLRAQELLQRLGLEDRTEYYPAQLSGGQQQRVSIARALMNGGQVILADEPTGALDSHSGEEVMAILHQLRDRGHTVIIVTHDPQVAAQAERVIEIRDGEIVRNPPAIDKVNVAGGTEPVVNTVSGWRQFVSGFNEALTMAWRALAANKMRTLLTMLGIIIGIASVVSIVVVGDAAKQMVLADIRSIGTNTIDVYPGKDFGDDDPQYQQALKYDDLIAIQKQPWVASATPAVSQNLRLRYNNVDVAASANGVSGDYFNVYGMTFSEGNTFNQEQLNGRAQVVVLDSNIRRQLFPHKADVVGEVILVGNMPARVIGVAEEKQSMLGSSKVLRVWLPYSTMSGRVMGQSWLNSITVRVKEGFDSAEAEQQLTRLLSLRHGKKDFFTWNMDGVLKTVEKTTRTLQLFLTLVAVISLVVGGIGVMNIMLVSVTERTSANDIPMDVGAGASYVLYHLFFRYPCKVLPAVGGALGITLSLLIAFTLQLFLPGWEIGFSPLALLLAFLCSTVTGILFGWLPARNAARLDPVDVLARE.

Positions 5-243 constitute an ABC transporter domain; the sequence is LELKDIRRSY…AGGTEPVVNT (239 aa). 41–48 serves as a coordination point for ATP; the sequence is GASGSGKS. The next 5 helical transmembrane spans lie at 273-293, 523-543, 554-574, 580-600, and 613-633; these read LLTM…VVVG, LFLT…VMNI, ANDI…HLFF, VLPA…AFTL, and PLAL…FGWL.

It belongs to the ABC transporter superfamily. Macrolide exporter (TC 3.A.1.122) family. As to quaternary structure, homodimer. Part of the tripartite efflux system MacAB-TolC, which is composed of an inner membrane transporter, MacB, a periplasmic membrane fusion protein, MacA, and an outer membrane component, TolC. The complex forms a large protein conduit and can translocate molecules across both the inner and outer membranes. Interacts with MacA.

It localises to the cell inner membrane. In terms of biological role, part of the tripartite efflux system MacAB-TolC. MacB is a non-canonical ABC transporter that contains transmembrane domains (TMD), which form a pore in the inner membrane, and an ATP-binding domain (NBD), which is responsible for energy generation. Confers resistance against macrolides. This is Macrolide export ATP-binding/permease protein MacB from Shigella dysenteriae serotype 1 (strain Sd197).